Here is a 703-residue protein sequence, read N- to C-terminus: MSIFNKVTKSFQWGQHKVTMETGEMARQAGGAVLLDMDGTVVLATVVAKSDAKPGQDFFPLTVDYLEKTYAAGRIPGSFFKREGRPSEFETLTSRLIDRPIRPLFPEGFFNEVQVVIHVLSLNPEVEGDIPALIASSAALSISGIPFNGPIGAARVAYINGEYVLNPGKTQLQNSTMDLVVAGTEAAVLMVESEAKQLSEEIMLGAIVFGHEQGNIAINAIHELVRDAGKPVWDWKAPAKDEVLIAKVVALAEEKLVAAYQIRNKQARTHATRQVTTWTKMGLKAEGVEFDGVAVEGMLFDIEAKIVRSQILAGDPRIDGRDTRTVRPIEIRNSVLPRTHGSALFTRGETQALVVTTLGTERDAQRIDALSGDYEDRFMLHYNMPPFATGETGRVGSPKRREIGHGRLAKRALIAVLPSKEEFPYTMRVVSEITESNGSSSMASVCGGCLSLMDAGVPMKAHVAGIAMGLIKEDNRFAVLTDILGDEDHLGDMDFKVAGTTFGITALQMDIKIQGITKEIMQVALAQAKEARMHILGKMQEAMGQANAEVSDFAPRLYVMKINPEKIRDVIGKGGAVIRALTEETGTQINIEEDGTITIASNDSAKADEAKRRIAEITAEVEIGKVYEGAITKILDFGALVNLMPGKDGLLHISQIAHERVEKVTDYLSEGQIIKVKVLETDEKGRVKLSMKALLDRPSQHQG.

Mg(2+) contacts are provided by Asp488 and Asp494. Positions 555 to 614 (PRLYVMKINPEKIRDVIGKGGAVIRALTEETGTQINIEEDGTITIASNDSAKADEAKRRI) constitute a KH domain. In terms of domain architecture, S1 motif spans 624 to 692 (GKVYEGAITK…EKGRVKLSMK (69 aa)).

The protein belongs to the polyribonucleotide nucleotidyltransferase family. Requires Mg(2+) as cofactor.

The protein resides in the cytoplasm. It catalyses the reaction RNA(n+1) + phosphate = RNA(n) + a ribonucleoside 5'-diphosphate. Involved in mRNA degradation. Catalyzes the phosphorolysis of single-stranded polyribonucleotides processively in the 3'- to 5'-direction. The protein is Polyribonucleotide nucleotidyltransferase of Polaromonas naphthalenivorans (strain CJ2).